Here is a 153-residue protein sequence, read N- to C-terminus: Pheromone-binding protein Gp-9 (153 aa).

Residues 1-19 (MKTFVLHIFIFALVAFASA) form the signal peptide. Intrachain disulfides connect C37–C77, C73–C129, and C118–C138.

Belongs to the PBP/GOBP family. In terms of assembly, homodimer.

The protein localises to the secreted. Functionally, colony queen number, a major feature of social organization, is associated with worker genotype for Gp-9. Colonies are headed by either a single reproductive queen (monogyne form) or multiple queens (polygyne form). Differences in worker Gp-9 genotypes between social forms may cause differences in workers' abilities to recognize queens and regulate their numbers. The polypeptide is Pheromone-binding protein Gp-9 (Solenopsis n. sp. (strain JP-2002) (Fire ant)).